Here is a 153-residue protein sequence, read N- to C-terminus: Endoribonuclease YbeY (153 aa).

Positions 115, 119, and 125 each coordinate Zn(2+).

This sequence belongs to the endoribonuclease YbeY family. It depends on Zn(2+) as a cofactor.

It localises to the cytoplasm. In terms of biological role, single strand-specific metallo-endoribonuclease involved in late-stage 70S ribosome quality control and in maturation of the 3' terminus of the 16S rRNA. The protein is Endoribonuclease YbeY of Blochmanniella floridana.